The following is a 232-amino-acid chain: T-cell surface glycoprotein CD1b-3 (232 aa).

Topologically, residues 1-201 (GLQEFQFEYP…LYWGHPMYIG (201 aa)) are extracellular. Disulfide bonds link Cys19-Cys83, Cys48-Cys62, and Cys123-Cys178. The N-linked (GlcNAc...) asparagine glycan is linked to Asn45. The region spanning 84 to 194 (PRYLLGVLDA…LGDQDIILYW (111 aa)) is the Ig-like domain. Residues 202 to 222 (LIFVAIIVPSLILLICLALWF) traverse the membrane as a helical segment. The Cytoplasmic segment spans residues 223–232 (WRRWSYQTVL).

Heterodimer with B2M (beta-2-microglobulin). Interacts with saposin C.

Its subcellular location is the cell membrane. It localises to the endosome membrane. It is found in the lysosome membrane. In terms of biological role, antigen-presenting protein that binds self and non-self lipid and glycolipid antigens and presents them to T-cell receptors on natural killer T-cells. The protein is T-cell surface glycoprotein CD1b-3 of Ovis aries (Sheep).